Reading from the N-terminus, the 34-residue chain is Cuticle protein 9 (34 aa).

In Blaberus craniifer (Death's head cockroach), this protein is Cuticle protein 9.